We begin with the raw amino-acid sequence, 499 residues long: Bifunctional purine biosynthesis protein PurH (499 aa).

The MGS-like domain maps to 1 to 144; that stretch reads MIKRALISVF…KNFKDVVVLT (144 aa).

It belongs to the PurH family.

It catalyses the reaction (6R)-10-formyltetrahydrofolate + 5-amino-1-(5-phospho-beta-D-ribosyl)imidazole-4-carboxamide = 5-formamido-1-(5-phospho-D-ribosyl)imidazole-4-carboxamide + (6S)-5,6,7,8-tetrahydrofolate. It carries out the reaction IMP + H2O = 5-formamido-1-(5-phospho-D-ribosyl)imidazole-4-carboxamide. Its pathway is purine metabolism; IMP biosynthesis via de novo pathway; 5-formamido-1-(5-phospho-D-ribosyl)imidazole-4-carboxamide from 5-amino-1-(5-phospho-D-ribosyl)imidazole-4-carboxamide (10-formyl THF route): step 1/1. The protein operates within purine metabolism; IMP biosynthesis via de novo pathway; IMP from 5-formamido-1-(5-phospho-D-ribosyl)imidazole-4-carboxamide: step 1/1. This Clostridium botulinum (strain Okra / Type B1) protein is Bifunctional purine biosynthesis protein PurH.